We begin with the raw amino-acid sequence, 240 residues long: UDP-2,3-diacylglucosamine hydrolase (240 aa).

Residues Asp-8, His-10, Asp-41, Asn-79, and His-114 each coordinate Mn(2+). Position 79-80 (79-80) interacts with substrate; sequence NR. Asp-122, Ser-160, Asn-164, Lys-167, and His-195 together coordinate substrate. Residues His-195 and His-197 each coordinate Mn(2+).

It belongs to the LpxH family. Requires Mn(2+) as cofactor.

It localises to the cell inner membrane. It carries out the reaction UDP-2-N,3-O-bis[(3R)-3-hydroxytetradecanoyl]-alpha-D-glucosamine + H2O = 2-N,3-O-bis[(3R)-3-hydroxytetradecanoyl]-alpha-D-glucosaminyl 1-phosphate + UMP + 2 H(+). It functions in the pathway glycolipid biosynthesis; lipid IV(A) biosynthesis; lipid IV(A) from (3R)-3-hydroxytetradecanoyl-[acyl-carrier-protein] and UDP-N-acetyl-alpha-D-glucosamine: step 4/6. Hydrolyzes the pyrophosphate bond of UDP-2,3-diacylglucosamine to yield 2,3-diacylglucosamine 1-phosphate (lipid X) and UMP by catalyzing the attack of water at the alpha-P atom. Involved in the biosynthesis of lipid A, a phosphorylated glycolipid that anchors the lipopolysaccharide to the outer membrane of the cell. The chain is UDP-2,3-diacylglucosamine hydrolase from Escherichia coli O157:H7.